Reading from the N-terminus, the 560-residue chain is DNA ligase B (560 aa).

Lys-124 serves as the catalytic N6-AMP-lysine intermediate.

It belongs to the NAD-dependent DNA ligase family. LigB subfamily.

It catalyses the reaction NAD(+) + (deoxyribonucleotide)n-3'-hydroxyl + 5'-phospho-(deoxyribonucleotide)m = (deoxyribonucleotide)n+m + AMP + beta-nicotinamide D-nucleotide.. Functionally, catalyzes the formation of phosphodiester linkages between 5'-phosphoryl and 3'-hydroxyl groups in double-stranded DNA using NAD as a coenzyme and as the energy source for the reaction. The sequence is that of DNA ligase B from Escherichia coli O9:H4 (strain HS).